The sequence spans 429 residues: Chaperone SurA (429 aa).

The N-terminal stretch at 1 to 18 (MFKRIALVCALFSGVCFA) is a signal peptide. 2 PpiC domains span residues 170–271 (NLTY…KLVA) and 281–380 (ITQT…EVIA).

It is found in the periplasm. The enzyme catalyses [protein]-peptidylproline (omega=180) = [protein]-peptidylproline (omega=0). Functionally, chaperone involved in the correct folding and assembly of outer membrane proteins. Recognizes specific patterns of aromatic residues and the orientation of their side chains, which are found more frequently in integral outer membrane proteins. May act in both early periplasmic and late outer membrane-associated steps of protein maturation. This Legionella pneumophila (strain Lens) protein is Chaperone SurA.